A 1331-amino-acid chain; its full sequence is Beta-mannanase/endoglucanase A (1331 aa).

Positions M1 to S41 are cleaved as a signal peptide. The tract at residues N42–S325 is catalytic (mannanase). The active-site Proton donor is E162. Residue E257 is the Nucleophile of the active site. 3 disordered regions span residues N319–T363, P515–T566, and E717–T780. A compositionally biased stretch (low complexity) spans T323 to P335. In terms of domain architecture, CBM3 1 spans T363–S516. 2 stretches are compositionally biased toward pro residues: residues A521–T541 and T551–V561. The region spanning T566 to S719 is the CBM3 2 domain. The segment covering T721–P735 has biased composition (low complexity). Composition is skewed to pro residues over residues T736–T756 and T766–T780. Residues I781 to V1331 form a catalytic (endoglucanase) region.

This sequence in the N-terminal section; belongs to the glycosyl hydrolase 5 (cellulase A) family. It in the C-terminal section; belongs to the glycosyl hydrolase 44 (cellulase J) family.

It carries out the reaction Random hydrolysis of (1-&gt;4)-beta-D-mannosidic linkages in mannans, galactomannans and glucomannans.. It catalyses the reaction Endohydrolysis of (1-&gt;4)-beta-D-glucosidic linkages in cellulose, lichenin and cereal beta-D-glucans.. Its function is as follows. Degradation of hemicelluloses, the second most abundant polysaccharides in nature. Contains two catalytic domains with mannanase and endoglucanase activities. The chain is Beta-mannanase/endoglucanase A (manA) from Caldicellulosiruptor saccharolyticus (Caldocellum saccharolyticum).